A 228-amino-acid chain; its full sequence is Phosphoglycolate phosphatase (228 aa).

The Nucleophile role is filled by Asp12. The Mg(2+) site is built by Asp12, Asp14, and Asp177.

It belongs to the HAD-like hydrolase superfamily. CbbY/CbbZ/Gph/YieH family. Requires Mg(2+) as cofactor.

The enzyme catalyses 2-phosphoglycolate + H2O = glycolate + phosphate. It participates in organic acid metabolism; glycolate biosynthesis; glycolate from 2-phosphoglycolate: step 1/1. In terms of biological role, specifically catalyzes the dephosphorylation of 2-phosphoglycolate. Is involved in the dissimilation of the intracellular 2-phosphoglycolate formed during the DNA repair of 3'-phosphoglycolate ends, a major class of DNA lesions induced by oxidative stress. This Vibrio parahaemolyticus serotype O3:K6 (strain RIMD 2210633) protein is Phosphoglycolate phosphatase.